Consider the following 542-residue polypeptide: Chaperonin GroEL (542 aa).

Residues 29–32, 86–90, glycine 413, 476–478, and aspartate 492 contribute to the ATP site; these read TLGP, DGTTT, and NAA.

Belongs to the chaperonin (HSP60) family. As to quaternary structure, forms a cylinder of 14 subunits composed of two heptameric rings stacked back-to-back. Interacts with the co-chaperonin GroES.

It localises to the cytoplasm. The catalysed reaction is ATP + H2O + a folded polypeptide = ADP + phosphate + an unfolded polypeptide.. In terms of biological role, together with its co-chaperonin GroES, plays an essential role in assisting protein folding. The GroEL-GroES system forms a nano-cage that allows encapsulation of the non-native substrate proteins and provides a physical environment optimized to promote and accelerate protein folding. The sequence is that of Chaperonin GroEL from Lactococcus lactis subsp. cremoris (strain MG1363).